A 474-amino-acid polypeptide reads, in one-letter code: Variant surface glycoprotein MITAT 1.5 (474 aa).

Positions 1-22 (MIHSNKVATVVLALISSWPADG) are cleaved as a signal peptide. Cystine bridges form between cysteine 37–cysteine 161 and cysteine 144–cysteine 214. N-linked (GlcNAc...) asparagine glycans are attached at residues asparagine 74 and asparagine 95. The N-linked (GlcNAc...) asparagine glycan is linked to asparagine 329. Positions 388 to 449 (AKDGEGQKNQ…ETDEPDKEKC (62 aa)) are disordered. Basic and acidic residues-rich tracts occupy residues 414 to 423 (TNKEACEKEN) and 435 to 449 (KGKD…KEKC). Asparagine 451 carries the GPI-anchor amidated asparagine lipid modification. Positions 452-474 (GSFLTSKQFAFSVVSAAFMALLF) are cleaved as a propeptide — removed in mature form.

It is found in the cell membrane. Functionally, VSG forms a coat on the surface of the parasite. The trypanosome evades the immune response of the host by expressing a series of antigenically distinct VSGs from an estimated 1000 VSG genes. This Trypanosoma brucei brucei protein is Variant surface glycoprotein MITAT 1.5.